A 122-amino-acid polypeptide reads, in one-letter code: Holo-[acyl-carrier-protein] synthase (122 aa).

Mg(2+) is bound by residues Asp-8 and Glu-55.

It belongs to the P-Pant transferase superfamily. AcpS family. Mg(2+) serves as cofactor.

It is found in the cytoplasm. The enzyme catalyses apo-[ACP] + CoA = holo-[ACP] + adenosine 3',5'-bisphosphate + H(+). In terms of biological role, transfers the 4'-phosphopantetheine moiety from coenzyme A to a Ser of acyl-carrier-protein. The chain is Holo-[acyl-carrier-protein] synthase from Fusobacterium nucleatum subsp. nucleatum (strain ATCC 25586 / DSM 15643 / BCRC 10681 / CIP 101130 / JCM 8532 / KCTC 2640 / LMG 13131 / VPI 4355).